Here is an 85-residue protein sequence, read N- to C-terminus: Toxin BmKa1 (85 aa).

The signal sequence occupies residues M1–S19. Residues R21–N83 enclose the LCN-type CS-alpha/beta domain. Intrachain disulfides connect C31–C82, C35–C55, C41–C65, and C45–C67.

Belongs to the long (4 C-C) scorpion toxin superfamily. Sodium channel inhibitor family. Alpha subfamily. In terms of tissue distribution, expressed by the venom gland.

It is found in the secreted. Alpha toxins bind voltage-independently at site-3 of sodium channels (Nav) and inhibit the inactivation of the activated channels, thereby blocking neuronal transmission. This Olivierus martensii (Manchurian scorpion) protein is Toxin BmKa1.